Reading from the N-terminus, the 286-residue chain is 4-hydroxybenzoate octaprenyltransferase (286 aa).

Helical transmembrane passes span 20–40 (IGTF…AGGM), 43–63 (LKVL…GCII), 95–115 (ILFV…NPLV), 116–136 (VQLS…KRFT), 142–162 (FLGV…LGTV), 167–187 (WWLF…YAMV), 210–230 (QIIG…GLSA), and 235–255 (VFAL…KLIF).

Belongs to the UbiA prenyltransferase family. Mg(2+) is required as a cofactor.

Its subcellular location is the cell inner membrane. It carries out the reaction all-trans-octaprenyl diphosphate + 4-hydroxybenzoate = 4-hydroxy-3-(all-trans-octaprenyl)benzoate + diphosphate. The protein operates within cofactor biosynthesis; ubiquinone biosynthesis. In terms of biological role, catalyzes the prenylation of para-hydroxybenzoate (PHB) with an all-trans polyprenyl group. Mediates the second step in the final reaction sequence of ubiquinone-8 (UQ-8) biosynthesis, which is the condensation of the polyisoprenoid side chain with PHB, generating the first membrane-bound Q intermediate 3-octaprenyl-4-hydroxybenzoate. In Shewanella loihica (strain ATCC BAA-1088 / PV-4), this protein is 4-hydroxybenzoate octaprenyltransferase.